Consider the following 67-residue polypeptide: Coiled-coil domain-containing protein 179 (67 aa).

Disordered stretches follow at residues 1-32 (MCLR…RQSV) and 47-67 (RKLG…ILWT). A coiled-coil region spans residues 27–53 (STRQSVEKRINYMQNLQKEKRKLGKRF).

In Mus musculus (Mouse), this protein is Coiled-coil domain-containing protein 179 (Ccdc179).